The chain runs to 181 residues: Acireductone dioxygenase 2 (181 aa).

The Fe(2+) site is built by histidine 97, histidine 99, glutamate 103, and histidine 141. Positions 97, 99, 103, and 141 each coordinate Ni(2+).

This sequence belongs to the acireductone dioxygenase (ARD) family. Monomer. It depends on Fe(2+) as a cofactor. Requires Ni(2+) as cofactor.

It catalyses the reaction 1,2-dihydroxy-5-(methylsulfanyl)pent-1-en-3-one + O2 = 3-(methylsulfanyl)propanoate + CO + formate + 2 H(+). It carries out the reaction 1,2-dihydroxy-5-(methylsulfanyl)pent-1-en-3-one + O2 = 4-methylsulfanyl-2-oxobutanoate + formate + 2 H(+). The protein operates within amino-acid biosynthesis; L-methionine biosynthesis via salvage pathway; L-methionine from S-methyl-5-thio-alpha-D-ribose 1-phosphate: step 5/6. Catalyzes 2 different reactions between oxygen and the acireductone 1,2-dihydroxy-3-keto-5-methylthiopentene (DHK-MTPene) depending upon the metal bound in the active site. Fe-containing acireductone dioxygenase (Fe-ARD) produces formate and 2-keto-4-methylthiobutyrate (KMTB), the alpha-ketoacid precursor of methionine in the methionine recycle pathway. Ni-containing acireductone dioxygenase (Ni-ARD) produces methylthiopropionate, carbon monoxide and formate, and does not lie on the methionine recycle pathway. This is Acireductone dioxygenase 2 from Pectobacterium atrosepticum (strain SCRI 1043 / ATCC BAA-672) (Erwinia carotovora subsp. atroseptica).